Consider the following 404-residue polypeptide: Argininosuccinate synthase (404 aa).

ATP is bound at residue 15–23 (AYSGGLDTS). Tyrosine 94 contacts L-citrulline. An ATP-binding site is contributed by glycine 124. L-aspartate is bound by residues threonine 126, asparagine 130, and aspartate 131. Asparagine 130 contacts L-citrulline. 4 residues coordinate L-citrulline: arginine 134, serine 182, glutamate 266, and tyrosine 278.

This sequence belongs to the argininosuccinate synthase family. Type 1 subfamily. Homotetramer.

It localises to the cytoplasm. The enzyme catalyses L-citrulline + L-aspartate + ATP = 2-(N(omega)-L-arginino)succinate + AMP + diphosphate + H(+). The protein operates within amino-acid biosynthesis; L-arginine biosynthesis; L-arginine from L-ornithine and carbamoyl phosphate: step 2/3. The sequence is that of Argininosuccinate synthase from Streptomyces avermitilis (strain ATCC 31267 / DSM 46492 / JCM 5070 / NBRC 14893 / NCIMB 12804 / NRRL 8165 / MA-4680).